We begin with the raw amino-acid sequence, 814 residues long: Putative serine/threonine-protein kinase-like protein CCR3 (814 aa).

The first 30 residues, 1 to 30 (MKRFINSTVTFSVTVTIAVIIFFLLSPVTS), serve as a signal peptide directing secretion. 10 N-linked (GlcNAc...) asparagine glycosylation sites follow: N6, N68, N136, N215, N226, N251, N260, N275, N299, and N309. Residues 31 to 393 (LGSGSTYAVV…SSPPSKALTR (363 aa)) lie on the Extracellular side of the membrane. The segment covering 366 to 381 (SQFPLPPPPPPPPPSP) has biased composition (pro residues). A disordered region spans residues 366-388 (SQFPLPPPPPPPPPSPSTSSPPS). A helical transmembrane segment spans residues 394 to 414 (GLLAFAIVGSVGAFAGICSVV). Residues 415–814 (YCLWTGVCLG…SSGICSIVSD (400 aa)) are Cytoplasmic-facing. Residues 433–478 (QPTITRGGSNSRSNSSNSRSLSIRRQGSRMLSMRRQRSGTSSMKHA) form a disordered region. Positions 441-457 (SNSRSNSSNSRSLSIRR) are enriched in low complexity. The Protein kinase domain occupies 496-794 (FSLENKIGSG…DIVGNLERAL (299 aa)). Residues 502–510 (IGSGSFGVV) and K524 contribute to the ATP site. The active-site Proton acceptor is D631.

Belongs to the protein kinase superfamily. Ser/Thr protein kinase family. In terms of assembly, homodimer. Expressed in roots, leaves, shoot apical meristems (SAM), and floral buds.

It localises to the membrane. The enzyme catalyses L-seryl-[protein] + ATP = O-phospho-L-seryl-[protein] + ADP + H(+). It catalyses the reaction L-threonyl-[protein] + ATP = O-phospho-L-threonyl-[protein] + ADP + H(+). Its function is as follows. Serine/threonine-protein kinase. The polypeptide is Putative serine/threonine-protein kinase-like protein CCR3 (CCR3) (Arabidopsis thaliana (Mouse-ear cress)).